The following is a 215-amino-acid chain: ATP-dependent Clp protease proteolytic subunit 1 (215 aa).

Ser-111 serves as the catalytic Nucleophile. His-136 is an active-site residue.

The protein belongs to the peptidase S14 family. Fourteen ClpP subunits assemble into 2 heptameric rings which stack back to back to give a disk-like structure with a central cavity, resembling the structure of eukaryotic proteasomes.

It localises to the cytoplasm. It catalyses the reaction Hydrolysis of proteins to small peptides in the presence of ATP and magnesium. alpha-casein is the usual test substrate. In the absence of ATP, only oligopeptides shorter than five residues are hydrolyzed (such as succinyl-Leu-Tyr-|-NHMec, and Leu-Tyr-Leu-|-Tyr-Trp, in which cleavage of the -Tyr-|-Leu- and -Tyr-|-Trp bonds also occurs).. Its function is as follows. Cleaves peptides in various proteins in a process that requires ATP hydrolysis. Has a chymotrypsin-like activity. Plays a major role in the degradation of misfolded proteins. This is ATP-dependent Clp protease proteolytic subunit 1 from Gluconobacter oxydans (strain 621H) (Gluconobacter suboxydans).